Reading from the N-terminus, the 321-residue chain is Ubiquinone biosynthesis O-methyltransferase, mitochondrial (321 aa).

Residues R102, G135, D157, and L210 each coordinate S-adenosyl-L-methionine. Mg(2+) contacts are provided by E211, E214, and H215.

Belongs to the class I-like SAM-binding methyltransferase superfamily. UbiG/COQ3 family. As to quaternary structure, component of a multi-subunit COQ enzyme complex. Mg(2+) is required as a cofactor.

The protein resides in the mitochondrion inner membrane. The enzyme catalyses a 3,4-dihydroxy-5-(all-trans-polyprenyl)benzoate + S-adenosyl-L-methionine = a 4-hydroxy-3-methoxy-5-(all-trans-polyprenyl)benzoate + S-adenosyl-L-homocysteine + H(+). It carries out the reaction a 3-demethylubiquinone + S-adenosyl-L-methionine = a ubiquinone + S-adenosyl-L-homocysteine. The catalysed reaction is a 3-demethylubiquinol + S-adenosyl-L-methionine = a ubiquinol + S-adenosyl-L-homocysteine + H(+). It functions in the pathway cofactor biosynthesis; ubiquinone biosynthesis. Functionally, O-methyltransferase required for two non-consecutive steps during ubiquinone biosynthesis. Catalyzes the 2 O-methylation of 3,4-dihydroxy-5-(all-trans-polyprenyl)benzoic acid into 4-hydroxy-3-methoxy-5-(all-trans-polyprenyl)benzoic acid. Also catalyzes the last step of ubiquinone biosynthesis by mediating methylation of 3-demethylubiquinone into ubiquinone. Also able to mediate the methylation of 3-demethylubiquinol into ubiquinol. This is Ubiquinone biosynthesis O-methyltransferase, mitochondrial from Dictyostelium discoideum (Social amoeba).